Consider the following 171-residue polypeptide: NADH-quinone oxidoreductase subunit I (171 aa).

4Fe-4S ferredoxin-type domains lie at 41 to 71 (LTRDPDGEERCVACNLCAAVCPVDCIALQKT) and 81 to 110 (EFFRINFSRCILCGLCEEACPTYAIQLTPD). The [4Fe-4S] cluster site is built by Cys-51, Cys-54, Cys-57, Cys-61, Cys-90, Cys-93, Cys-96, and Cys-100.

The protein belongs to the complex I 23 kDa subunit family. NDH-1 is composed of 14 different subunits. Subunits NuoA, H, J, K, L, M, N constitute the membrane sector of the complex. It depends on [4Fe-4S] cluster as a cofactor.

The protein resides in the cell inner membrane. It carries out the reaction a quinone + NADH + 5 H(+)(in) = a quinol + NAD(+) + 4 H(+)(out). Functionally, NDH-1 shuttles electrons from NADH, via FMN and iron-sulfur (Fe-S) centers, to quinones in the respiratory chain. The immediate electron acceptor for the enzyme in this species is believed to be ubiquinone. Couples the redox reaction to proton translocation (for every two electrons transferred, four hydrogen ions are translocated across the cytoplasmic membrane), and thus conserves the redox energy in a proton gradient. The protein is NADH-quinone oxidoreductase subunit I of Methylococcus capsulatus (strain ATCC 33009 / NCIMB 11132 / Bath).